A 971-amino-acid chain; its full sequence is U2 snRNP component HSH155 (971 aa).

Disordered regions lie at residues 1–22 (MSHPIQFVNANNSDKSHQLGGQ) and 54–118 (TRTV…AVKE). Over residues 8 to 22 (VNANNSDKSHQLGGQ) the composition is skewed to polar residues. Basic and acidic residues predominate over residues 54 to 75 (TRTVQNREDSYHKRRFDMKFEP). Over residues 78–90 (DTQTVTSSENTQD) the composition is skewed to polar residues. HEAT repeat units follow at residues 199–237 (MIFNRLLPILLDRSLEDQERHLMIKTIDRVLYQLGDLTK), 273–310 (AGLKTILTVMRPDIENEDEYVRNVTSRAAAVVAKALGV), 350–387 (NHLTGLMSCIKDCLMDDHVPVRIVTAHTLSTLAENSYP), 513–550 (LGCSYTIDKLLTPLRDEAEPFRTMAVHAVTRTVNLLGT), 596–633 (PFLAPIVSTILNHLKHKTPLVRQHAADLCAILIPVIKN), 680–717 (PPINQILPTLTPILRNKHRKVEVNTIKFVGLIGKLAPT), 722–759 (KEWMRICFELLELLKSTNKEIRRSANATFGFIAEAIGP), 792–829 (CGPYNVLPVIMNEYTTPETNVQNGVLKAMSFMFEYIGN), and 832–870 (KDYIYFITPLLEDALTDRDLVHRQTASNVITHLALNCSG).

This sequence belongs to the SF3B1 family. Belongs to the CWC complex (or CEF1-associated complex), a spliceosome sub-complex reminiscent of a late-stage spliceosome composed of the U2, U5 and U6 snRNAs and at least BUD13, BUD31, BRR2, CDC40, CEF1, CLF1, CUS1, CWC2, CWC15, CWC21, CWC22, CWC23, CWC24, CWC25, CWC27, ECM2, HSH155, IST3, ISY1, LEA1, MSL1, NTC20, PRP8, PRP9, PRP11, PRP19, PRP21, PRP22, PRP45, PRP46, SLU7, SMB1, SMD1, SMD2, SMD3, SMX2, SMX3, SNT309, SNU114, SPP2, SYF1, SYF2, RSE1 and YJU2. Interacts with RDS3.

It is found in the nucleus. Functionally, contacts pre-mRNA on both sides of the branch site early in spliceosome assembly. The sequence is that of U2 snRNP component HSH155 (HSH155) from Saccharomyces cerevisiae (strain ATCC 204508 / S288c) (Baker's yeast).